The chain runs to 206 residues: Large ribosomal subunit protein uL4 (206 aa).

A disordered region spans residues 63-93; the sequence is MYKQKGTGRARHHSARAPQFRGGGKAHGPVV. The span at 64 to 77 shows a compositional bias: basic residues; sequence YKQKGTGRARHHSA.

It belongs to the universal ribosomal protein uL4 family. In terms of assembly, part of the 50S ribosomal subunit.

Functionally, one of the primary rRNA binding proteins, this protein initially binds near the 5'-end of the 23S rRNA. It is important during the early stages of 50S assembly. It makes multiple contacts with different domains of the 23S rRNA in the assembled 50S subunit and ribosome. Forms part of the polypeptide exit tunnel. This Rhizobium meliloti (strain 1021) (Ensifer meliloti) protein is Large ribosomal subunit protein uL4.